Consider the following 433-residue polypeptide: Ribosomal protein uS12 methylthiotransferase RimO (433 aa).

One can recognise an MTTase N-terminal domain in the interval Gln-6–Arg-122. [4Fe-4S] cluster contacts are provided by Cys-15, Cys-51, Cys-85, Cys-146, Cys-150, and Cys-153. The Radical SAM core domain maps to Leu-132–Glu-362. A TRAM domain is found at Arg-365–Asp-432.

Belongs to the methylthiotransferase family. RimO subfamily. [4Fe-4S] cluster serves as cofactor.

It is found in the cytoplasm. It catalyses the reaction L-aspartate(89)-[ribosomal protein uS12]-hydrogen + (sulfur carrier)-SH + AH2 + 2 S-adenosyl-L-methionine = 3-methylsulfanyl-L-aspartate(89)-[ribosomal protein uS12]-hydrogen + (sulfur carrier)-H + 5'-deoxyadenosine + L-methionine + A + S-adenosyl-L-homocysteine + 2 H(+). In terms of biological role, catalyzes the methylthiolation of an aspartic acid residue of ribosomal protein uS12. This Prosthecochloris aestuarii (strain DSM 271 / SK 413) protein is Ribosomal protein uS12 methylthiotransferase RimO.